The following is a 304-amino-acid chain: Probable WRKY transcription factor 29 (304 aa).

2 disordered regions span residues 76 to 96 and 185 to 236; these read LPED…GCLL and YTNE…IPSA. Residues 78 to 88 are compositionally biased toward basic and acidic residues; that stretch reads EDSKPFRDDKK. Residues 128–194 constitute a DNA-binding region (WRKY); the sequence is KEENLLSDAW…YTNEHNHELP (67 aa). 2 stretches are compositionally biased toward polar residues: residues 196 to 213 and 225 to 236; these read RRNS…QPKP and SSPTSNPMIPSA.

This sequence belongs to the WRKY group II-e family.

It localises to the nucleus. In terms of biological role, transcription factor involved in the expression of defense genes in innate immune response of plants. Interacts specifically with the W box (5'-(T)TGAC[CT]-3'), a frequently occurring elicitor-responsive cis-acting element. Activates WRKY 22, SIRK and its own promoters. In Arabidopsis thaliana (Mouse-ear cress), this protein is Probable WRKY transcription factor 29 (WRKY29).